Reading from the N-terminus, the 82-residue chain is MKTSVVFVIAGLALLSVVCYASELKEQSSVNEVLSTIFHFEQPEERGCLEFWWKCNPNDDKCCRPKLKCSKLFKLCNFSFGK.

An N-terminal signal peptide occupies residues 1–21 (MKTSVVFVIAGLALLSVVCYA). The propeptide occupies 22–46 (SELKEQSSVNEVLSTIFHFEQPEER). Disulfide bonds link C48-C63, C55-C69, and C62-C76. F80 carries the post-translational modification Phenylalanine amide.

This sequence belongs to the neurotoxin 10 (Hwtx-1) family. 52 (MTx4) subfamily. Expressed by the venom gland.

Its subcellular location is the secreted. Functionally, this cationic hydrophobic peptide acts on a lot of different channels and has an antimicrobial activity. It blocks mechanosensitive ion channels (also named stretch-activated channels or SACs), without having effect on whole-cell voltage-sensitive currents. It also affects acetylcholine receptors (nAChRs) through interactions with membrane lipids by prolonging the closing time without affecting channel conductance or opening activity. It shows high affinity for lipid bilayers. It acts by partitioning into the membrane and perturbing the interface between the channel and the lipid bilayer without necessarily being in physical contact with the channel. It inhibits atrial fibrillation as well as the membrane motor of outer hair cells at low doses. It also binds to the voltage sensor of voltage-gated potassium channels from the archaebacterium Aeropyrum pernix (KvAP) without affecting channel gating. It also shows a low inhibition on a large spectra of sodium channels (Nav1.1/SCN1A, Nav1.2/SCN2A, Nav1.3/SCN3A, Nav1.4/SCN4A, Nav1.5/SCN5A, Nav1.6/SCN8A, Nav1.7/SCN9A) (IC(50)=7.4-14 uM), and potassium channels Kv11.1/KCNH2 and Kv11.2/KCNH6 (IC(50)=11 uM for both). It exhibits antimicrobial activities against the Gram-positive bacteria B.subtilis (MIC=0.5 uM), S.aureus (MIC=2-4 uM), and S.epidermidis (MIC=4-8 uM), and Gram-negative bacteria S.typhimurium (MIC=32.64 uM), P.aeruginosa (MIC=8-16 uM), and E.coli (MIC=8-16 uM). This is M-theraphotoxin-Gr1a from Grammostola rosea (Chilean rose tarantula).